A 210-amino-acid polypeptide reads, in one-letter code: Thiamine-phosphate synthase (210 aa).

Residues 34–38 (QLRHK) and N66 contribute to the 4-amino-2-methyl-5-(diphosphooxymethyl)pyrimidine site. 2 residues coordinate Mg(2+): D67 and D86. S105 lines the 4-amino-2-methyl-5-(diphosphooxymethyl)pyrimidine pocket. 131–133 (TSS) provides a ligand contact to 2-[(2R,5Z)-2-carboxy-4-methylthiazol-5(2H)-ylidene]ethyl phosphate. K134 serves as a coordination point for 4-amino-2-methyl-5-(diphosphooxymethyl)pyrimidine. Residue G162 participates in 2-[(2R,5Z)-2-carboxy-4-methylthiazol-5(2H)-ylidene]ethyl phosphate binding.

It belongs to the thiamine-phosphate synthase family. Mg(2+) serves as cofactor.

It carries out the reaction 2-[(2R,5Z)-2-carboxy-4-methylthiazol-5(2H)-ylidene]ethyl phosphate + 4-amino-2-methyl-5-(diphosphooxymethyl)pyrimidine + 2 H(+) = thiamine phosphate + CO2 + diphosphate. The enzyme catalyses 2-(2-carboxy-4-methylthiazol-5-yl)ethyl phosphate + 4-amino-2-methyl-5-(diphosphooxymethyl)pyrimidine + 2 H(+) = thiamine phosphate + CO2 + diphosphate. It catalyses the reaction 4-methyl-5-(2-phosphooxyethyl)-thiazole + 4-amino-2-methyl-5-(diphosphooxymethyl)pyrimidine + H(+) = thiamine phosphate + diphosphate. It functions in the pathway cofactor biosynthesis; thiamine diphosphate biosynthesis; thiamine phosphate from 4-amino-2-methyl-5-diphosphomethylpyrimidine and 4-methyl-5-(2-phosphoethyl)-thiazole: step 1/1. Condenses 4-methyl-5-(beta-hydroxyethyl)thiazole monophosphate (THZ-P) and 2-methyl-4-amino-5-hydroxymethyl pyrimidine pyrophosphate (HMP-PP) to form thiamine monophosphate (TMP). This Chlorobium limicola (strain DSM 245 / NBRC 103803 / 6330) protein is Thiamine-phosphate synthase.